A 355-amino-acid polypeptide reads, in one-letter code: DNA-directed RNA polymerase subunit alpha (355 aa).

Residues Met-1–Glu-233 are alpha N-terminal domain (alpha-NTD). The interval Lys-268–His-355 is alpha C-terminal domain (alpha-CTD).

This sequence belongs to the RNA polymerase alpha chain family. In terms of assembly, in plastids the minimal PEP RNA polymerase catalytic core is composed of four subunits: alpha, beta, beta', and beta''. When a (nuclear-encoded) sigma factor is associated with the core the holoenzyme is formed, which can initiate transcription.

It is found in the plastid. Its subcellular location is the chloroplast. The catalysed reaction is RNA(n) + a ribonucleoside 5'-triphosphate = RNA(n+1) + diphosphate. DNA-dependent RNA polymerase catalyzes the transcription of DNA into RNA using the four ribonucleoside triphosphates as substrates. The chain is DNA-directed RNA polymerase subunit alpha from Jasminum nudiflorum (Winter jasmine).